Consider the following 60-residue polypeptide: Large ribosomal subunit protein uL30 (60 aa).

The protein belongs to the universal ribosomal protein uL30 family. As to quaternary structure, part of the 50S ribosomal subunit.

In Flavobacterium johnsoniae (strain ATCC 17061 / DSM 2064 / JCM 8514 / BCRC 14874 / CCUG 350202 / NBRC 14942 / NCIMB 11054 / UW101) (Cytophaga johnsonae), this protein is Large ribosomal subunit protein uL30.